We begin with the raw amino-acid sequence, 780 residues long: Lon protease (780 aa).

The Lon N-terminal domain occupies 11-204 (IPVLPLRDVV…RLMAIMESEI (194 aa)). ATP is bound at residue 356-363 (GPPGVGKT). The region spanning 592 to 773 (KNQIGQVIGL…KEVLNLSLEN (182 aa)) is the Lon proteolytic domain. Residues S679 and K722 contribute to the active site.

The protein belongs to the peptidase S16 family. In terms of assembly, homohexamer. Organized in a ring with a central cavity.

Its subcellular location is the cytoplasm. The catalysed reaction is Hydrolysis of proteins in presence of ATP.. Functionally, ATP-dependent serine protease that mediates the selective degradation of mutant and abnormal proteins as well as certain short-lived regulatory proteins. Required for cellular homeostasis and for survival from DNA damage and developmental changes induced by stress. Degrades polypeptides processively to yield small peptide fragments that are 5 to 10 amino acids long. Binds to DNA in a double-stranded, site-specific manner. The sequence is that of Lon protease from Buchnera aphidicola subsp. Baizongia pistaciae (strain Bp).